The chain runs to 509 residues: MEKYNSLSDFLKEFYIPTYVLSAETEEEEEEESRPTPASPVLVFINSKSGGQLGGELILTYRSLLNHNQVFDLDQETPDKVLRRIYLNLERLKDDDFARQIREKLKIIVAGGDGTAGWLLGVVCDLKLSHPPPIATVPLGTGNNLPFAFGWGKKNPGTDRTAVESFLEQVLKAKVMKIDNWHILMRMKTPKEGGSCDPVAPLELPHSLHAFHRVSPTDELNKEGCHTFRGGFWNYFSLGMDAQISYAFHSERKLHPEKFKNQLVNQSTYVKLGCTQGWFCASLFHPASRNIAQLAKVKIATRNGQWQDLHIPHSIRSIVCLNLPSFSGGLNPWGTPNPRKQRDRGLTPPFVDDGLIEVVGFRNAWHGLVLLAPNGHGTRLAQANRIRFEFHKGATDHTFMRMDGEPWKQPLPLDDETVMVEISHLGQVNMLATHDCRSRSVFDPSTPRHQDGAEDYDDNEDDSVAEGEEFRKFGAADTFKIPDEGEHSNKKGRASRRRNSNVHGWSHVL.

Residues 36 to 187 enclose the DAGKc domain; that stretch reads TPASPVLVFI…IDNWHILMRM (152 aa). A compositionally biased stretch (basic and acidic residues) spans 439–452; that stretch reads RSVFDPSTPRHQDG. Residues 439 to 509 form a disordered region; the sequence is RSVFDPSTPR…SNVHGWSHVL (71 aa). Acidic residues predominate over residues 453–467; it reads AEDYDDNEDDSVAEG. Over residues 468 to 489 the composition is skewed to basic and acidic residues; the sequence is EEFRKFGAADTFKIPDEGEHSN. Over residues 490-500 the composition is skewed to basic residues; sequence KKGRASRRRNS.

Belongs to the eukaryotic diacylglycerol kinase family. In terms of assembly, monomer.

The catalysed reaction is a 1,2-diacyl-sn-glycerol + ATP = a 1,2-diacyl-sn-glycero-3-phosphate + ADP + H(+). Functionally, phosphorylates the second messenger diacylglycerol (DAG) to generate phosphatidic acid (PA), another important signaling molecule. PA is required for plant development and responses to abiotic stress and pathogen attack. May be involved in the accumulation of PA during cold stress. The polypeptide is Diacylglycerol kinase 5 (DGK5) (Arabidopsis thaliana (Mouse-ear cress)).